The chain runs to 138 residues: Small ribosomal subunit protein uS8 (138 aa).

It belongs to the universal ribosomal protein uS8 family. Part of the 30S ribosomal subunit. Contacts proteins S5 and S12.

Its function is as follows. One of the primary rRNA binding proteins, it binds directly to 16S rRNA central domain where it helps coordinate assembly of the platform of the 30S subunit. In Thermus thermophilus (strain ATCC BAA-163 / DSM 7039 / HB27), this protein is Small ribosomal subunit protein uS8 (rpsH).